A 437-amino-acid chain; its full sequence is 3-phosphoshikimate 1-carboxyvinyltransferase (437 aa).

Lys22, Ser23, and Arg27 together coordinate 3-phosphoshikimate. Lys22 lines the phosphoenolpyruvate pocket. Phosphoenolpyruvate contacts are provided by Gly94 and Arg122. 3-phosphoshikimate is bound by residues Ser167, Gln169, Asp314, and Lys341. Residue Gln169 participates in phosphoenolpyruvate binding. Asp314 functions as the Proton acceptor in the catalytic mechanism. Arg345 and Arg389 together coordinate phosphoenolpyruvate.

It belongs to the EPSP synthase family. Monomer.

Its subcellular location is the cytoplasm. It catalyses the reaction 3-phosphoshikimate + phosphoenolpyruvate = 5-O-(1-carboxyvinyl)-3-phosphoshikimate + phosphate. It functions in the pathway metabolic intermediate biosynthesis; chorismate biosynthesis; chorismate from D-erythrose 4-phosphate and phosphoenolpyruvate: step 6/7. Its function is as follows. Catalyzes the transfer of the enolpyruvyl moiety of phosphoenolpyruvate (PEP) to the 5-hydroxyl of shikimate-3-phosphate (S3P) to produce enolpyruvyl shikimate-3-phosphate and inorganic phosphate. This Oenococcus oeni (strain ATCC BAA-331 / PSU-1) protein is 3-phosphoshikimate 1-carboxyvinyltransferase.